A 367-amino-acid chain; its full sequence is Aminomethyltransferase (367 aa).

It belongs to the GcvT family. The glycine cleavage system is composed of four proteins: P, T, L and H.

The catalysed reaction is N(6)-[(R)-S(8)-aminomethyldihydrolipoyl]-L-lysyl-[protein] + (6S)-5,6,7,8-tetrahydrofolate = N(6)-[(R)-dihydrolipoyl]-L-lysyl-[protein] + (6R)-5,10-methylene-5,6,7,8-tetrahydrofolate + NH4(+). In terms of biological role, the glycine cleavage system catalyzes the degradation of glycine. The polypeptide is Aminomethyltransferase (Parasynechococcus marenigrum (strain WH8102)).